A 194-amino-acid chain; its full sequence is Adenylate kinase (194 aa).

Gly8 to Thr16 lines the ATP pocket.

Belongs to the archaeal adenylate kinase family.

Its subcellular location is the cytoplasm. It carries out the reaction AMP + ATP = 2 ADP. The chain is Adenylate kinase (adkA) from Sulfurisphaera tokodaii (strain DSM 16993 / JCM 10545 / NBRC 100140 / 7) (Sulfolobus tokodaii).